The primary structure comprises 478 residues: NADH oxidase (478 aa).

Residues 8–12 (GINHA), Asp33, Cys43, Val80, 111–114 (ASGA), Lys149, and Tyr177 each bind FAD. The active-site Proton acceptor is His11. The active-site Redox-active is the Cys43. A Cysteine sulfinic acid (-SO2H) modification is found at Cys43. NAD(+) contacts are provided by residues 170–185 (VAIV…LAEA), Asp197, and Gly264. FAD-binding positions include 295-305 (LNHKDVYVIGG), Leu322, Ala323, and Thr324. Residue Ala353 participates in NAD(+) binding. Residue Phe450 coordinates FAD.

This sequence belongs to the class-III pyridine nucleotide-disulfide oxidoreductase family. FAD is required as a cofactor.

It carries out the reaction 2 NADH + O2 + 2 H(+) = 2 NAD(+) + 2 H2O. Catalyzes the four-electron reduction of molecular oxygen to water. The chain is NADH oxidase (nox) from Mycoplasma genitalium (strain ATCC 33530 / DSM 19775 / NCTC 10195 / G37) (Mycoplasmoides genitalium).